We begin with the raw amino-acid sequence, 130 residues long: Translation initiation factor 5A (130 aa).

K36 is modified (hypusine).

It belongs to the eIF-5A family.

The protein localises to the cytoplasm. Functions by promoting the formation of the first peptide bond. The polypeptide is Translation initiation factor 5A (eif5a) (Methanothermobacter thermautotrophicus (strain ATCC 29096 / DSM 1053 / JCM 10044 / NBRC 100330 / Delta H) (Methanobacterium thermoautotrophicum)).